We begin with the raw amino-acid sequence, 74 residues long: Conotoxin VnMEKL-0222 (74 aa).

Residues Met1–Ala19 form the signal peptide. A propeptide spanning residues Leu20–Gly46 is cleaved from the precursor. Intrachain disulfides connect Cys48–Cys62, Cys55–Cys66, and Cys61–Cys71.

It belongs to the conotoxin O2 superfamily. As to expression, expressed by the venom duct.

Its subcellular location is the secreted. The protein is Conotoxin VnMEKL-0222 of Conus ventricosus (Mediterranean cone).